The primary structure comprises 340 residues: Deubiquitinase SseL (340 aa).

Residue histidine 222 is part of the active site. Residue cysteine 284 is the Nucleophile of the active site.

The protein belongs to the peptidase C79 family.

The protein resides in the secreted. It localises to the host cytoplasm. Its function is as follows. Effector proteins function to alter host cell physiology and promote bacterial survival in host tissues. This protease targets the host cell ubiquitin pathway by acting as a deubiquitinase in infected host cells. In Salmonella arizonae (strain ATCC BAA-731 / CDC346-86 / RSK2980), this protein is Deubiquitinase SseL (sseL).